A 605-amino-acid polypeptide reads, in one-letter code: Alpha-fetoprotein (605 aa).

Positions 1 to 18 (MKWITPASLILLLHFAAS) are cleaved as a signal peptide. 3 consecutive Albumin domains span residues 19–207 (KALH…SIAK), 208–398 (ELRE…EELQ), and 399–597 (KHIE…KLIS). Cystine bridges form between cysteine 95–cysteine 110, cysteine 109–cysteine 120, cysteine 144–cysteine 189, cysteine 188–cysteine 197, cysteine 220–cysteine 266, cysteine 265–cysteine 273, cysteine 285–cysteine 299, and cysteine 298–cysteine 309. Phosphoserine occurs at positions 107, 111, and 113. Asparagine 247 is a glycosylation site (N-linked (GlcNAc...) asparagine). Serine 340 carries the phosphoserine modification. Cystine bridges form between cysteine 380/cysteine 389, cysteine 412/cysteine 458, cysteine 457/cysteine 468, cysteine 481/cysteine 497, cysteine 496/cysteine 507, cysteine 534/cysteine 579, and cysteine 578/cysteine 587. Phosphoserine is present on serine 440. An N-linked (GlcNAc...) asparagine glycan is attached at asparagine 498.

Belongs to the ALB/AFP/VDB family. In terms of processing, glycosylated; contains two glycans. Sulfated. As to expression, plasma.

The protein resides in the secreted. In terms of biological role, binds estrogens, fatty acids and metals. The polypeptide is Alpha-fetoprotein (Afp) (Mus musculus (Mouse)).